The following is a 455-amino-acid chain: MAGIIDLASLAPTDTVLKLPHPYLTEYTVQRSDDKLFQLHPKEGSTVQPLPFALHAPHVRFSAPADLKSSELPASANNSLWARSRRSPFSDVRWESDAAAPTLAQAWLLLYVLFTVRPGMELVRLQLSGPGADVLSQQLREVLLGIAHPPPPPKSQAAAPEQATTETSSTVVVLRSTFWQGAGSPFGPRPVWCPDASPSSLPASTPLSQFPTTPLQHTITVASAGDPQDPDRYQQSLHPIRPAKPAPGAVIYSRWVPHLKETFSMVSVDYTDAEHLRLFHEWQNDPRVSQGWNETGTLEQHREYLRKIHEDPHQVALLAKWDDAYFAYFEIYWAKEDRLGGYYDAQDYDRGRHSLVGDVKFRGPHRVTAWWSSLMHYLFLDDPRTMWVVGEPKDTNAIPVMYDLIHGFGLEKFVDLPHKRSALVRCPRVRFFQLCPLGAQEKAVGGVNIGLVPKL.

The PTS1-type peroxisomal targeting signal signature appears at 453–455 (PKL).

This sequence belongs to the lysine N-acyltransferase mbtK family.

It localises to the peroxisome. Its pathway is siderophore biosynthesis. Its function is as follows. Hydroxyornithine transacylase; part of the gene cluster that mediates the biosynthesis of at least 11 siderophores, including beauverichelin A, dimerumic acid (DA), Na-dimethyl coprogen (NADC), eleutherazine B, ferricrocin (FC), fusarinine A, fusarinine C (FsC), metachelin A, mevalonolactone, rhodotorulic acid (RA) and tenellin. This cocktail of siderophores for iron metabolism is essential for virulence, and more specifically for the fungal virulence in penetrating through the host cuticle. Siderophore synthesis is also involved in conidial germination under iron-deficient conditions. For biosynthesis of fusarinine C, the transacylase SIDF transfers anhydromevalonyl to N(5)-hydroxyornithine. The required anhydromevalonyl-CoA moiety is derived from mevalonate by CoA ligation and dehydration catalyzed by SIDI and sidH respectively. This is N(5)-hydroxyornithine:cis-anhydromevalonyl coenzyme A-N(5)-transacylase SIDF from Beauveria bassiana (strain ARSEF 2860) (White muscardine disease fungus).